The sequence spans 87 residues: Antitoxin epsilon (87 aa).

This sequence belongs to the epsilon antitoxin family. In the presence of the zeta toxin, forms an inactive PezA(2)PezT(2) heterotetramer.

Antitoxin component of a type II toxin-antitoxin (TA) system. Neutralizes the toxic effect of cognate zeta toxin. Part of a postsegregational killing (PSK) system involved in the killing of plasmid-free cells. Continuous synthesis of the epsilon antitoxin is required to counteract the zeta toxin. The protein is Antitoxin epsilon of Lactococcus lactis subsp. lactis (Streptococcus lactis).